A 249-amino-acid chain; its full sequence is Electron transfer flavoprotein subunit beta (249 aa).

This sequence belongs to the ETF beta-subunit/FixA family. In terms of assembly, heterodimer of an alpha and a beta subunit. Requires FAD as cofactor. The cofactor is AMP.

The electron transfer flavoprotein serves as a specific electron acceptor for other dehydrogenases. It transfers the electrons to the main respiratory chain via ETF-ubiquinone oxidoreductase (ETF dehydrogenase). The polypeptide is Electron transfer flavoprotein subunit beta (etfB) (Pseudomonas aeruginosa (strain ATCC 15692 / DSM 22644 / CIP 104116 / JCM 14847 / LMG 12228 / 1C / PRS 101 / PAO1)).